A 963-amino-acid chain; its full sequence is Importin-13 (963 aa).

HEAT repeat units lie at residues 24-54, 56-88, 95-135, 142-179, 194-231, 236-268, 276-325, 330-372, 375-438, 440-476, 487-522, 524-558, 562-600, 603-648, 676-716, 720-754, 761-803, 815-845, 860-893, and 897-931; these read ESVEKALHQLYYDPNIENKNLAQKWLMQAQV, PQAWHFSWQLLQPDKVPEIQYFGASALPIKTSR, TDQY…LSMM, AVADMVRLFQAEDSPVDGQGRCLALLELLTVLPEEFQT, LAVECGAVFPLLEQLLQQPSSPSCVRQKVLKCFSSWVQ, LQDCEALIQAAFAALQDSELFDSSVEAIVNAIS, VNTL…ALLD, WQSF…DDIL, EAEK…YEML, AELLSNLYDKLGRLLTSSEEPYSWQHTEALLYGFQSI, VVPGLIGLIPRISISNVQLADTVMFTIGALSEWLAD, PVMINSVLPLVLHALGNPEPSVSSVSTLKKICREC, LPPYAANIVAVSQDVLMKQIHKTSQCMWLMQALGFLLSA, VEEI…SNLF, PVVV…VKTL, FAPMVPQLCEMLGRMYSTIPQASALDLTRQLVHIF, FPPI…ALKR, VKAVFQCAVLALKFPEAPTVKASCGFFTELL, EDGRMLLIAVLEAIGGQASRSLMDCFADILFALN, and FSLLSMWIKEALQPPGFPSARLSPEQKDTFSQQIL. An Importin N-terminal domain is found at 45-111; sequence AQKWLMQAQV…KAQLFTQITR (67 aa).

This sequence belongs to the importin beta family. As to quaternary structure, interacts with UBC9, RAN, RBM8A, eIF-1A and PAX6.

It localises to the cytoplasm. The protein resides in the nucleus. Functions in nuclear protein import as nuclear transport receptor. Serves as receptor for nuclear localization signals (NLS) in cargo substrates. Is thought to mediate docking of the importin/substrate complex to the nuclear pore complex (NPC) through binding to nucleoporin and the complex is subsequently translocated through the pore by an energy requiring, Ran-dependent mechanism. At the nucleoplasmic side of the NPC, Ran binds to the importin, the importin/substrate complex dissociates and importin is re-exported from the nucleus to the cytoplasm where GTP hydrolysis releases Ran. The directionality of nuclear import is thought to be conferred by an asymmetric distribution of the GTP- and GDP-bound forms of Ran between the cytoplasm and nucleus. Mediates the nuclear import of UBC9, the RBM8A/MAGOH complex, PAX6 and probably other members of the paired homeobox family. Also mediates nuclear export of eIF-1A, and the cytoplasmic release of eIF-1A is triggered by the loading of import substrates onto IPO13. This is Importin-13 (IPO13) from Pongo abelii (Sumatran orangutan).